A 71-amino-acid polypeptide reads, in one-letter code: Palustrin-Ca (71 aa).

Positions 1 to 22 are cleaved as a signal peptide; that stretch reads MFTLKKSLLLLFFLGTISLSLC. Residues 23–40 constitute a propeptide that is removed on maturation; it reads EQERDADGDEGEVEEVKR. C63 and C69 form a disulfide bridge.

It belongs to the frog skin active peptide (FSAP) family. Brevinin subfamily. As to expression, expressed by the skin glands.

It localises to the secreted. Its subcellular location is the target cell membrane. Its function is as follows. Antibacterial peptide with amphipathic alpha-helical structure that exhibits potent broad-spectrum activity against Gram-positive and -negative bacteria. It is active against Listeria ATCC 54004 (MIC=30 ug/ml), S.aureus ATCC 25923 (MIC=7.8 ug/ml), S.suis 2 CVCC 606 (MIC=31.25 ug/ml), B.subtilis ADB403 (30 ug/ml), K.pneumoniae ATCC 700603 (MIC=60 ug/ml) and P.aeruginosa ATCC 227853 (MIC=30 ug/ml). Does not show activity against Salmonella ATCC 20020 and the fungus Candida albicans. Is also cytotoxic to HeLa cells at high concentrations. In addition, shows a strong antitumor activity but only a little hemolytic activity. Despite the presence of a Gly residue at position 10, this alpha-helical peptide remains relatively rigid, not exhibiting any significant flexibility during the molecular dynamics simulation. The peptide shows a preference for a position parallel to the target membrane that suggests it exerts its antimicrobial activity through a non-pore-forming mechanism of action, such as the carpet model or the interfacial activity model. The protein is Palustrin-Ca of Aquarana catesbeiana (American bullfrog).